The following is an 86-amino-acid chain: Exodeoxyribonuclease 7 small subunit (86 aa).

The tract at residues 67-86 is disordered; the sequence is RVSPASGGATEAPAPAERDR.

Belongs to the XseB family. In terms of assembly, heterooligomer composed of large and small subunits.

It localises to the cytoplasm. The catalysed reaction is Exonucleolytic cleavage in either 5'- to 3'- or 3'- to 5'-direction to yield nucleoside 5'-phosphates.. In terms of biological role, bidirectionally degrades single-stranded DNA into large acid-insoluble oligonucleotides, which are then degraded further into small acid-soluble oligonucleotides. The protein is Exodeoxyribonuclease 7 small subunit of Beutenbergia cavernae (strain ATCC BAA-8 / DSM 12333 / CCUG 43141 / JCM 11478 / NBRC 16432 / NCIMB 13614 / HKI 0122).